We begin with the raw amino-acid sequence, 147 residues long: Large ribosomal subunit protein uL13 (147 aa).

It belongs to the universal ribosomal protein uL13 family. Part of the 50S ribosomal subunit.

Its function is as follows. This protein is one of the early assembly proteins of the 50S ribosomal subunit, although it is not seen to bind rRNA by itself. It is important during the early stages of 50S assembly. This chain is Large ribosomal subunit protein uL13, found in Pseudarthrobacter chlorophenolicus (strain ATCC 700700 / DSM 12829 / CIP 107037 / JCM 12360 / KCTC 9906 / NCIMB 13794 / A6) (Arthrobacter chlorophenolicus).